The chain runs to 91 residues: Na(+)/H(+) antiporter subunit F (91 aa).

A run of 3 helical transmembrane segments spans residues 5 to 27 (ILMIVLVVMSISLFVCFIRTLIG), 34 to 53 (IVALDTFGINLIGFIGVIMM), and 63 to 82 (VVLVISILAFIGSIALSKFI).

Belongs to the CPA3 antiporters (TC 2.A.63) subunit F family. In terms of assembly, forms a heterooligomeric complex that consists of seven subunits: MrpA, MrpB, MrpC, MrpD, MrpE, MrpF and MrpG.

The protein resides in the cell membrane. Its function is as follows. Mnh complex is a Na(+)Li(+)/H(+) antiporter involved in Na(+) and/or Li(+) excretion and Na(+) resistance. Na(+)/H(+) antiport consumes a transmembrane electrical potential, and is thus inferred to be electrogenic. Does not transport K(+), Ca(2+) or Mg(2+). In Alkalihalophilus pseudofirmus (strain ATCC BAA-2126 / JCM 17055 / OF4) (Bacillus pseudofirmus), this protein is Na(+)/H(+) antiporter subunit F (mrpF).